Here is a 265-residue protein sequence, read N- to C-terminus: Undecaprenyl-diphosphatase (265 aa).

7 helical membrane-spanning segments follow: residues 38–58, 80–100, 107–127, 135–155, 175–195, 213–233, and 244–264; these read SDMF…IIYW, LIVA…LGFE, PIAW…WAAA, ITWL…VFPG, AAAT…ASGY, ALAI…KWLL, and FAIY…TGMI.

The protein belongs to the UppP family.

It localises to the cell inner membrane. The enzyme catalyses di-trans,octa-cis-undecaprenyl diphosphate + H2O = di-trans,octa-cis-undecaprenyl phosphate + phosphate + H(+). In terms of biological role, catalyzes the dephosphorylation of undecaprenyl diphosphate (UPP). Confers resistance to bacitracin. In Rhizobium etli (strain ATCC 51251 / DSM 11541 / JCM 21823 / NBRC 15573 / CFN 42), this protein is Undecaprenyl-diphosphatase.